A 280-amino-acid polypeptide reads, in one-letter code: Shikimate dehydrogenase (NADP(+)) (280 aa).

Shikimate contacts are provided by residues 20-22 and Thr67; that span reads TLS. Lys71 acts as the Proton acceptor in catalysis. Residues Asn92 and Asp107 each contribute to the shikimate site. NADP(+)-binding positions include 131 to 135, 154 to 159, and Leu224; these read GAGGA and NRTIDK. Tyr226 lines the shikimate pocket. An NADP(+)-binding site is contributed by Gly247.

Belongs to the shikimate dehydrogenase family. Homodimer.

It catalyses the reaction shikimate + NADP(+) = 3-dehydroshikimate + NADPH + H(+). It functions in the pathway metabolic intermediate biosynthesis; chorismate biosynthesis; chorismate from D-erythrose 4-phosphate and phosphoenolpyruvate: step 4/7. Functionally, involved in the biosynthesis of the chorismate, which leads to the biosynthesis of aromatic amino acids. Catalyzes the reversible NADPH linked reduction of 3-dehydroshikimate (DHSA) to yield shikimate (SA). The chain is Shikimate dehydrogenase (NADP(+)) from Carboxydothermus hydrogenoformans (strain ATCC BAA-161 / DSM 6008 / Z-2901).